The sequence spans 688 residues: G-protein coupled receptor-associated protein LMBRD2 (688 aa).

Residues 1 to 3 (MSG) lie on the Extracellular side of the membrane. The chain crosses the membrane as a helical span at residues 4–21 (AALGLEIVFVFFLALFLL). The Cytoplasmic portion of the chain corresponds to 22-32 (HRYGDFKKQHR). The chain crosses the membrane as a helical span at residues 33-53 (LVIIATLLAWYLCFLIVFILP). At 54–99 (LDVSTTIYNRCKLAVNSSPAESNSSFVTLAPSKQQCFKPWSYIPNG) the chain is on the extracellular side. N76 is a glycosylation site (N-linked (GlcNAc...) asparagine). A helical transmembrane segment spans residues 100–120 (IMPIFWRVVYWTSQFLTWILL). The Cytoplasmic segment spans residues 121-144 (PFMQSYARSGGFSITGKIKTALIE). Residues 145 to 165 (NAIYYGTYLLIFGAFLIYVAV) form a helical membrane-spanning segment. The Extracellular portion of the chain corresponds to 166-180 (NPKFNLQWNQLQTIG). A helical membrane pass occupies residues 181–201 (IAAANTWGLFLLVLLLGYGLV). Residues 202-381 (EIPRSHWNGA…ECLLRPWFYR (180 aa)) lie on the Cytoplasmic side of the membrane. Positions 222 to 254 (FKAAKLMTEKADAEENLEDIMEEVRKVSESIKY) form a coiled coil. A helical membrane pass occupies residues 382-402 (VLAVVLAAFSVIVVWSECTFF). Residues 403-426 (STRPVLSLVAVFIQLAEKTYNYIY) lie on the Extracellular side of the membrane. Residues 427-447 (IEMACFLTIFFLSICVYSTVF) traverse the membrane as a helical segment. Residues 448–467 (RIRVFNYYYLASHHQTDAYS) are Cytoplasmic-facing. A helical transmembrane segment spans residues 468–488 (LLFSGMLFCRLTPPLCLNFLG). At 489–515 (LTHMDATISHTDAQPTAYTSIMGSMKV) the chain is on the extracellular side. The chain crosses the membrane as a helical span at residues 516 to 536 (LSFIADGFYIYYPMLVVILCI). Residues 537-688 (ATYFSLGTRC…MSRSRIFEDV (152 aa)) are Cytoplasmic-facing. Residues 600 to 617 (REDSTRNRVVHTEQKESS) show a composition bias toward basic and acidic residues. Residues 600 to 673 (REDSTRNRVV…ESDSGRYQPG (74 aa)) form a disordered region. Residues 618-634 (FSETNTNRPLSKYTRTN) are compositionally biased toward polar residues. Residues 635 to 644 (GRTERDRIEL) show a composition bias toward basic and acidic residues.

It belongs to the LIMR family.

The protein localises to the cell membrane. Functionally, may associate with G-protein coupled receptors and regulate downstream signaling pathways. The polypeptide is G-protein coupled receptor-associated protein LMBRD2 (Gallus gallus (Chicken)).